The chain runs to 71 residues: Small ribosomal subunit protein bS21 (71 aa).

The span at 48–59 (EKASLAKRHAKR) shows a compositional bias: basic residues. The interval 48–71 (EKASLAKRHAKRNFRENARNTRLY) is disordered. A compositionally biased stretch (basic and acidic residues) spans 60–71 (NFRENARNTRLY).

Belongs to the bacterial ribosomal protein bS21 family.

This Glaesserella parasuis serovar 5 (strain SH0165) (Haemophilus parasuis) protein is Small ribosomal subunit protein bS21.